A 406-amino-acid polypeptide reads, in one-letter code: Phosphatidylserine decarboxylase proenzyme, mitochondrial (406 aa).

The transit peptide at 1–49 (MAVAGGRGCVRSLREGVLWRSSPCHCDYTATRHFLGALQKLPLQAWVRK) directs the protein to the mitochondrion. Topologically, residues 50-60 (VHTAPLRTLFL) are mitochondrial matrix. Residues 61 to 79 (LRPVPILLAAGGGYAGYRQ) form a helical membrane-spanning segment. Over 80–406 (YEKYRERQLE…ILFGEALGSL (327 aa)) the chain is Mitochondrial intermembrane. Catalysis depends on charge relay system; for autoendoproteolytic cleavage activity residues Asp-188, His-264, and Ser-375. The active-site Schiff-base intermediate with substrate; via pyruvic acid; for decarboxylase activity is Ser-375. Ser-375 is modified (pyruvic acid (Ser); by autocatalysis).

The protein belongs to the phosphatidylserine decarboxylase family. PSD-B subfamily. Eukaryotic type I sub-subfamily. Heterodimer of a large membrane-associated beta subunit and a small pyruvoyl-containing alpha subunit. Requires pyruvate as cofactor. Post-translationally, is synthesized initially as an inactive proenzyme. Formation of the active enzyme involves a self-maturation process in which the active site pyruvoyl group is generated from an internal serine residue via an autocatalytic post-translational modification. Two non-identical subunits are generated from the proenzyme in this reaction, and the pyruvate is formed at the N-terminus of the alpha chain, which is derived from the carboxyl end of the proenzyme. The autoendoproteolytic cleavage occurs by a canonical serine protease mechanism, in which the side chain hydroxyl group of the serine supplies its oxygen atom to form the C-terminus of the beta chain, while the remainder of the serine residue undergoes an oxidative deamination to produce ammonia and the pyruvoyl prosthetic group on the alpha chain. During this reaction, the Ser that is part of the protease active site of the proenzyme becomes the pyruvoyl prosthetic group, which constitutes an essential element of the active site of the mature decarboxylase.

It is found in the mitochondrion inner membrane. The protein resides in the cytoplasm. It localises to the lipid droplet. It catalyses the reaction a 1,2-diacyl-sn-glycero-3-phospho-L-serine + H(+) = a 1,2-diacyl-sn-glycero-3-phosphoethanolamine + CO2. It functions in the pathway phospholipid metabolism; phosphatidylethanolamine biosynthesis. Inhibited by hydroxylamine. Functionally, catalyzes the formation of phosphatidylethanolamine (PtdEtn) from phosphatidylserine (PtdSer). Plays a central role in phospholipid metabolism and in the interorganelle trafficking of phosphatidylserine. May be involved in lipid droplet biogenesis at the endoplasmic reticulum membrane. The chain is Phosphatidylserine decarboxylase proenzyme, mitochondrial from Rattus norvegicus (Rat).